The sequence spans 158 residues: Large ribosomal subunit protein uL15 (158 aa).

It belongs to the universal ribosomal protein uL15 family. As to quaternary structure, part of the 50S ribosomal subunit.

Binds to the 23S rRNA. This is Large ribosomal subunit protein uL15 from Aeropyrum pernix (strain ATCC 700893 / DSM 11879 / JCM 9820 / NBRC 100138 / K1).